The chain runs to 81 residues: ATP synthase subunit c, chloroplastic (81 aa).

2 helical membrane passes run 3–23 and 57–77; these read PLVFAASVIAAGLAVGLASIG and LAFMEALTIYGLVVALALLFA.

This sequence belongs to the ATPase C chain family. In terms of assembly, F-type ATPases have 2 components, F(1) - the catalytic core - and F(0) - the membrane proton channel. F(1) has five subunits: alpha(3), beta(3), gamma(1), delta(1), epsilon(1). F(0) has four main subunits: a(1), b(1), b'(1) and c(10-14). The alpha and beta chains form an alternating ring which encloses part of the gamma chain. F(1) is attached to F(0) by a central stalk formed by the gamma and epsilon chains, while a peripheral stalk is formed by the delta, b and b' chains.

It is found in the plastid. It localises to the chloroplast thylakoid membrane. F(1)F(0) ATP synthase produces ATP from ADP in the presence of a proton or sodium gradient. F-type ATPases consist of two structural domains, F(1) containing the extramembraneous catalytic core and F(0) containing the membrane proton channel, linked together by a central stalk and a peripheral stalk. During catalysis, ATP synthesis in the catalytic domain of F(1) is coupled via a rotary mechanism of the central stalk subunits to proton translocation. Its function is as follows. Key component of the F(0) channel; it plays a direct role in translocation across the membrane. A homomeric c-ring of between 10-14 subunits forms the central stalk rotor element with the F(1) delta and epsilon subunits. In Atropa belladonna (Belladonna), this protein is ATP synthase subunit c, chloroplastic.